A 159-amino-acid chain; its full sequence is RxLR effector protein 24 (159 aa).

A signal peptide spans 1 to 18 (MRFLVWVFFVGLVTFVSG). The short motif at 58–82 (RFLRSNANQDLTTANDDSDVKEEER) is the RxLR-dEER element. Positions 109-159 (EKAFQHMMKQGETPTSLAKRLEIGGAAELRYEKVYEKYTAWWINYHTVAGT) are RABA-binding domain.

Belongs to the RxLR effector family. As to quaternary structure, interacts with potato RABA GTPases including RABA1a, RABA2a and RABA4a.

It is found in the secreted. The protein resides in the host cell membrane. It localises to the host endomembrane system. In terms of biological role, effector protein that contributes to pathogen virulence. Targets members of the RABA GTPases subfamily to inhibit vesicular secretion, leading to an accumulation of secretory proteins in the endoplasmic reticulum. The sequence is that of RxLR effector protein 24 from Phytophthora infestans (strain T30-4) (Potato late blight agent).